The chain runs to 168 residues: Vasopressin-neurophysin 2-copeptin (168 aa).

A signal peptide spans 1-23; the sequence is MLAMMLNTTLSACFLSLLALTSA. A disulfide bridge connects residues cysteine 24 and cysteine 29. Position 32 is a glycine amide (glycine 32). Cystine bridges form between cysteine 45-cysteine 89, cysteine 48-cysteine 62, cysteine 56-cysteine 79, cysteine 63-cysteine 69, cysteine 96-cysteine 108, cysteine 102-cysteine 120, and cysteine 109-cysteine 114. Asparagine 135 carries an N-linked (GlcNAc...) asparagine glycan.

This sequence belongs to the vasopressin/oxytocin family. As to quaternary structure, interacts with vasopressin receptors V1bR/AVPR1B (Ki=85 pM), V1aR/AVPR1A (Ki=0.6 nM) and V2R/AVPR2 (Ki=4.9 nM). Interacts with oxytocin receptor (OXTR) (Ki=110 nM).

Its subcellular location is the secreted. Neurophysin 2 specifically binds vasopressin. In terms of biological role, vasopressin has a direct antidiuretic action on the kidney, it also causes vasoconstriction of the peripheral vessels. Acts by binding to vasopressin receptors (V1bR/AVPR1B, V1aR/AVPR1A, and V2R/AVPR2). The chain is Vasopressin-neurophysin 2-copeptin (Avp) from Rattus norvegicus (Rat).